Reading from the N-terminus, the 125-residue chain is Large ribosomal subunit protein bL12 (125 aa).

Belongs to the bacterial ribosomal protein bL12 family. In terms of assembly, homodimer. Part of the ribosomal stalk of the 50S ribosomal subunit. Forms a multimeric L10(L12)X complex, where L10 forms an elongated spine to which 2 to 4 L12 dimers bind in a sequential fashion. Binds GTP-bound translation factors.

In terms of biological role, forms part of the ribosomal stalk which helps the ribosome interact with GTP-bound translation factors. Is thus essential for accurate translation. This is Large ribosomal subunit protein bL12 from Methylobacterium radiotolerans (strain ATCC 27329 / DSM 1819 / JCM 2831 / NBRC 15690 / NCIMB 10815 / 0-1).